The primary structure comprises 113 residues: Fruiting body-specific class I hydrophobin fbh1 (113 aa).

Residues 1-23 (MFSIRIATVVLAASAALRPPARI) form the signal peptide. 4 cysteine pairs are disulfide-bonded: cysteine 33–cysteine 92, cysteine 40–cysteine 86, cysteine 41–cysteine 73, and cysteine 93–cysteine 106.

The protein belongs to the fungal hydrophobin family. In terms of assembly, self-assembles to form functional amyloid fibrils called rodlets. Self-assembly into fibrillar rodlets occurs spontaneously at hydrophobic:hydrophilic interfaces and the rodlets further associate laterally to form amphipathic monolayers.

The protein resides in the secreted. It is found in the cell wall. Functionally, aerial growth, conidiation, and dispersal of filamentous fungi in the environment rely upon a capability of their secreting small amphipathic proteins called hydrophobins (HPBs) with low sequence identity. Class I can self-assemble into an outermost layer of rodlet bundles on aerial cell surfaces, conferring cellular hydrophobicity that supports fungal growth, development and dispersal; whereas Class II form highly ordered films at water-air interfaces through intermolecular interactions but contribute nothing to the rodlet structure. Fbh1 is a fruiting body-specific class I hydrophobin that is involved in the growth rate and primordia formation. The sequence is that of Fruiting body-specific class I hydrophobin fbh1 from Pleurotus ostreatus (Oyster mushroom).